A 193-amino-acid polypeptide reads, in one-letter code: Mediator of RNA polymerase II transcription subunit 30 (193 aa).

The interval methionine 1–glutamine 20 is disordered. Serine 2 bears the N-acetylserine mark. Residues glycine 10–glutamine 20 show a composition bias toward low complexity. A coiled-coil region spans residues tyrosine 71–arginine 93.

This sequence belongs to the Mediator complex subunit 30 family. In terms of assembly, component of the Mediator complex, which is composed of MED1, MED4, MED6, MED7, MED8, MED9, MED10, MED11, MED12, MED13, MED13L, MED14, MED15, MED16, MED17, MED18, MED19, MED20, MED21, MED22, MED23, MED24, MED25, MED26, MED27, MED29, MED30, MED31, CCNC, CDK8 and CDC2L6/CDK11. The MED12, MED13, CCNC and CDK8 subunits form a distinct module termed the CDK8 module. Mediator containing the CDK8 module is less active than Mediator lacking this module in supporting transcriptional activation. Individual preparations of the Mediator complex lacking one or more distinct subunits have been variously termed ARC, CRSP, DRIP, PC2, SMCC and TRAP.

It is found in the nucleus. Functionally, component of the Mediator complex, a coactivator involved in the regulated transcription of nearly all RNA polymerase II-dependent genes. Mediator functions as a bridge to convey information from gene-specific regulatory proteins to the basal RNA polymerase II transcription machinery. Mediator is recruited to promoters by direct interactions with regulatory proteins and serves as a scaffold for the assembly of a functional preinitiation complex with RNA polymerase II and the general transcription factors. The polypeptide is Mediator of RNA polymerase II transcription subunit 30 (MED30) (Bos taurus (Bovine)).